The following is a 276-amino-acid chain: Large ribosomal subunit protein uL2 (276 aa).

Disordered regions lie at residues 35 to 58 (RKLS…GGGH) and 218 to 276 (RPIT…KNRK). Basic residues predominate over residues 255–276 (RRPKKASNKMIVRRRPNGKNRK).

This sequence belongs to the universal ribosomal protein uL2 family. As to quaternary structure, part of the 50S ribosomal subunit. Forms a bridge to the 30S subunit in the 70S ribosome.

In terms of biological role, one of the primary rRNA binding proteins. Required for association of the 30S and 50S subunits to form the 70S ribosome, for tRNA binding and peptide bond formation. It has been suggested to have peptidyltransferase activity; this is somewhat controversial. Makes several contacts with the 16S rRNA in the 70S ribosome. The chain is Large ribosomal subunit protein uL2 from Bifidobacterium adolescentis (strain ATCC 15703 / DSM 20083 / NCTC 11814 / E194a).